The sequence spans 294 residues: UDP-3-O-acyl-N-acetylglucosamine deacetylase (294 aa).

His-75, His-232, and Asp-236 together coordinate Zn(2+). The active-site Proton donor is the His-259.

Belongs to the LpxC family. Requires Zn(2+) as cofactor.

It carries out the reaction a UDP-3-O-[(3R)-3-hydroxyacyl]-N-acetyl-alpha-D-glucosamine + H2O = a UDP-3-O-[(3R)-3-hydroxyacyl]-alpha-D-glucosamine + acetate. It functions in the pathway glycolipid biosynthesis; lipid IV(A) biosynthesis; lipid IV(A) from (3R)-3-hydroxytetradecanoyl-[acyl-carrier-protein] and UDP-N-acetyl-alpha-D-glucosamine: step 2/6. Its function is as follows. Catalyzes the hydrolysis of UDP-3-O-myristoyl-N-acetylglucosamine to form UDP-3-O-myristoylglucosamine and acetate, the committed step in lipid A biosynthesis. The chain is UDP-3-O-acyl-N-acetylglucosamine deacetylase from Campylobacter jejuni subsp. jejuni serotype O:2 (strain ATCC 700819 / NCTC 11168).